The primary structure comprises 541 residues: Probable inorganic phosphate transporter 1-12 (541 aa).

The Cytoplasmic segment spans residues 1–26; that stretch reads MGRQDQQLQVLNALDAAKTQWYHFTA. The helical transmembrane segment at 27-47 threads the bilayer; that stretch reads IIVAGMGFFTDAYDLFCISLV. At 48-70 the chain is on the extracellular side; it reads TKLLGRIYYTDPASPTPGSLPPN. The chain crosses the membrane as a helical span at residues 71-91; sequence IAAAVNGVALCGTLSGQLFFG. Over 92–100 the chain is Cytoplasmic; sequence WLGDKLGRK. The chain crosses the membrane as a helical span at residues 101–121; the sequence is SVYGMTLLLMVICSIASGLSF. Topologically, residues 122–124 are extracellular; the sequence is SHT. The helical transmembrane segment at 125 to 145 threads the bilayer; it reads PTSVMATLCFFRFWLGFGIGG. Residues 146–163 are Cytoplasmic-facing; it reads DYPLSATIMSEYANKKTR. A helical membrane pass occupies residues 164–184; sequence GAFIAAVFAMQGFGILAGGVV. At 185-213 the chain is on the extracellular side; it reads TLAMSAGFQAAFPAPAYEVNAAASTVPQA. The chain crosses the membrane as a helical span at residues 214-234; that stretch reads DYVWRIILMLGALPAILTYYW. Topologically, residues 235–297 are cytoplasmic; that stretch reads RMKMPETARY…ARFAKRHGAH (63 aa). Residues 298–318 traverse the membrane as a helical segment; that stretch reads LLGTAATWFLVDVAYYSQNLF. The Extracellular portion of the chain corresponds to 319 to 349; that stretch reads QKDIFTSIHWIPKARTMSELEEVFRISRAQT. Residues 350-370 form a helical membrane-spanning segment; it reads LIALCGTVPGYWFTVFLIDII. At 371-374 the chain is on the cytoplasmic side; sequence GRFK. Residues 375-395 form a helical membrane-spanning segment; the sequence is IQLLGFAGMTAFMLGLAIPYH. The Extracellular segment spans residues 396–403; that stretch reads HWTMPGNQ. The chain crosses the membrane as a helical span at residues 404–424; it reads VIFVFLYGFTFFFANFGPNAT. Residues 425–443 are Cytoplasmic-facing; that stretch reads TFIVPAEIFPARLRSTCHG. Residues 444 to 464 form a helical membrane-spanning segment; sequence ISAASGKAGAIIGAFGFLYAA. Residues 465-484 are Extracellular-facing; it reads QPQDKAHVDAGYKPGIGVRN. The helical transmembrane segment at 485-505 threads the bilayer; that stretch reads ALFVLAGCNLVGFLMTWMLVP. Over 506–541 the chain is Cytoplasmic; it reads ESKGKSLEEMSGEADDEEASANGGATAVNSSGVEMV. Residues 512 to 541 are disordered; sequence LEEMSGEADDEEASANGGATAVNSSGVEMV. The segment covering 515–524 has biased composition (acidic residues); the sequence is MSGEADDEEA. Residues 532-541 are compositionally biased toward polar residues; the sequence is AVNSSGVEMV.

The protein belongs to the major facilitator superfamily. Phosphate:H(+) symporter (TC 2.A.1.9) family.

The protein resides in the membrane. In terms of biological role, high-affinity transporter for external inorganic phosphate. This chain is Probable inorganic phosphate transporter 1-12 (PHT1-12), found in Oryza sativa subsp. japonica (Rice).